We begin with the raw amino-acid sequence, 374 residues long: Serine/threonine-protein kinase-transforming protein mos (374 aa).

One can recognise a Protein kinase domain in the interval 94–370 (VCLMHRLGSG…LLQRDLKAFR (277 aa)). ATP is bound by residues 100-108 (LGSGGFGSV) and Lys-121. The active-site Proton acceptor is Asp-229.

The protein belongs to the protein kinase superfamily. Ser/Thr protein kinase family.

It carries out the reaction L-seryl-[protein] + ATP = O-phospho-L-seryl-[protein] + ADP + H(+). The catalysed reaction is L-threonyl-[protein] + ATP = O-phospho-L-threonyl-[protein] + ADP + H(+). This is Serine/threonine-protein kinase-transforming protein mos (V-MOS) from Mus musculus (Mouse).